We begin with the raw amino-acid sequence, 497 residues long: Cytochrome P450 CYP94D108 (497 aa).

The chain crosses the membrane as a helical span at residues 6 to 26; the sequence is LLSLALLLLAAAAAAAFVLFP. Residue C439 coordinates heme.

The protein belongs to the cytochrome P450 family. In terms of tissue distribution, mainly expressed in roots and, at low levels, in leaves, fruits and stems.

It localises to the membrane. It functions in the pathway steroid metabolism; cholesterol metabolism. Functionally, involved in the biosynthesis of spiroketal steroid and saponin natural products from cholesterol such as diosgenin and analogs (e.g. furostanol and spirostanol), plant defense compounds used as main precursors for the industrial production of steroid hormones. During the 5,6-spiroketalization of cholesterol, may catalyze the 27-monohydroxylation of furostanol-type steroid to an intermediate product that undergoes a stereospecific formation of the terminal heterocycle to yield diosgenin. The polypeptide is Cytochrome P450 CYP94D108 (Paris polyphylla (Daiswa polyphylla)).